The sequence spans 485 residues: Glutamyl-tRNA(Gln) amidotransferase subunit A (485 aa).

Catalysis depends on charge relay system residues Lys78 and Ser153. The Acyl-ester intermediate role is filled by Ser177.

The protein belongs to the amidase family. GatA subfamily. In terms of assembly, heterotrimer of A, B and C subunits.

The catalysed reaction is L-glutamyl-tRNA(Gln) + L-glutamine + ATP + H2O = L-glutaminyl-tRNA(Gln) + L-glutamate + ADP + phosphate + H(+). Allows the formation of correctly charged Gln-tRNA(Gln) through the transamidation of misacylated Glu-tRNA(Gln) in organisms which lack glutaminyl-tRNA synthetase. The reaction takes place in the presence of glutamine and ATP through an activated gamma-phospho-Glu-tRNA(Gln). The protein is Glutamyl-tRNA(Gln) amidotransferase subunit A of Bacillus cereus (strain ZK / E33L).